The following is a 1004-amino-acid chain: Bifunctional glutamine synthetase adenylyltransferase/adenylyl-removing enzyme (1004 aa).

Residues 1–496 are adenylyl removase; sequence MVRPPSARSA…LHAKLFYRPL (496 aa). The segment at 502–1004 is adenylyl transferase; it reads RMDPDALRLS…RAVVERVFGS (503 aa).

Belongs to the GlnE family. It depends on Mg(2+) as a cofactor.

It catalyses the reaction [glutamine synthetase]-O(4)-(5'-adenylyl)-L-tyrosine + phosphate = [glutamine synthetase]-L-tyrosine + ADP. The catalysed reaction is [glutamine synthetase]-L-tyrosine + ATP = [glutamine synthetase]-O(4)-(5'-adenylyl)-L-tyrosine + diphosphate. Involved in the regulation of glutamine synthetase GlnA, a key enzyme in the process to assimilate ammonia. When cellular nitrogen levels are high, the C-terminal adenylyl transferase (AT) inactivates GlnA by covalent transfer of an adenylyl group from ATP to specific tyrosine residue of GlnA, thus reducing its activity. Conversely, when nitrogen levels are low, the N-terminal adenylyl removase (AR) activates GlnA by removing the adenylyl group by phosphorolysis, increasing its activity. The regulatory region of GlnE binds the signal transduction protein PII (GlnB) which indicates the nitrogen status of the cell. This is Bifunctional glutamine synthetase adenylyltransferase/adenylyl-removing enzyme from Nocardia farcinica (strain IFM 10152).